We begin with the raw amino-acid sequence, 374 residues long: Probable aminopeptidase YDR415C (374 aa).

An N-terminal signal peptide occupies residues 1–18 (MRIQSLFVLFNVAIIAWS). Residues His-177, Asp-196, Glu-235, Asp-262, and His-340 each coordinate Zn(2+).

It belongs to the peptidase M28 family. M28E subfamily. It depends on Zn(2+) as a cofactor.

This is Probable aminopeptidase YDR415C from Saccharomyces cerevisiae (strain ATCC 204508 / S288c) (Baker's yeast).